The sequence spans 236 residues: 2-C-methyl-D-erythritol 4-phosphate cytidylyltransferase (236 aa).

It belongs to the IspD/TarI cytidylyltransferase family. IspD subfamily.

It catalyses the reaction 2-C-methyl-D-erythritol 4-phosphate + CTP + H(+) = 4-CDP-2-C-methyl-D-erythritol + diphosphate. It participates in isoprenoid biosynthesis; isopentenyl diphosphate biosynthesis via DXP pathway; isopentenyl diphosphate from 1-deoxy-D-xylulose 5-phosphate: step 2/6. In terms of biological role, catalyzes the formation of 4-diphosphocytidyl-2-C-methyl-D-erythritol from CTP and 2-C-methyl-D-erythritol 4-phosphate (MEP). This chain is 2-C-methyl-D-erythritol 4-phosphate cytidylyltransferase, found in Symbiobacterium thermophilum (strain DSM 24528 / JCM 14929 / IAM 14863 / T).